Reading from the N-terminus, the 115-residue chain is Cell division topological specificity factor (115 aa).

Residues 93–115 (QLKEPKNQSELDSPETEGTDQKS) form a disordered region. The segment covering 104–115 (DSPETEGTDQKS) has biased composition (acidic residues).

Belongs to the MinE family.

In terms of biological role, prevents the cell division inhibition by proteins MinC and MinD at internal division sites while permitting inhibition at polar sites. This ensures cell division at the proper site by restricting the formation of a division septum at the midpoint of the long axis of the cell. The sequence is that of Cell division topological specificity factor from Prochlorococcus marinus (strain NATL1A).